A 398-amino-acid polypeptide reads, in one-letter code: Serpin-Z1C (398 aa).

Residues 343–367 (GTEAAASTAIKMALLQARPPSVMDF) form an RCL region.

This sequence belongs to the serpin family.

In terms of biological role, inhibits chymotrypsin and cathepsin G in vitro. This Triticum aestivum (Wheat) protein is Serpin-Z1C.